The primary structure comprises 803 residues: PR domain zinc finger protein 4 (803 aa).

An SET domain is found at 408 to 532 (KQLVLRQSIV…PESELLFYYS (125 aa)). 5 consecutive C2H2-type zinc fingers follow at residues 593-615 (WKCSMCPQAFISPSKLHVHFMGH), 621-643 (HKCDFCSKAFSDPSNLRTHLKIH), 649-671 (YRCTLCDKSFTQKAHLESHMVIH), 677-699 (LKCDYCDKLFMRRQDLKQHVLIH), and 705-727 (IKCPKCDKLFLRTNHLKKHLNSH). A C2H2-type 6; degenerate zinc finger spans residues 733–755 (YVCEKCTKAYLTKYHLTRHLKTC). The tract at residues 757-803 (EPSSSSSAQEEEDDESEEEDLADSMRTEDCRMGSAVYSTDESLSAHK) is disordered. Residues 765–778 (QEEEDDESEEEDLA) show a composition bias toward acidic residues. Residues 792–803 (VYSTDESLSAHK) are compositionally biased toward polar residues.

This sequence belongs to the class V-like SAM-binding methyltransferase superfamily.

The protein localises to the nucleus. Its function is as follows. May function as a transcription factor involved in cell differentiation. This is PR domain zinc finger protein 4 (Prdm4) from Mus musculus (Mouse).